The following is a 417-amino-acid chain: 4-hydroxy-3-methylbut-2-enyl diphosphate reductase (417 aa).

Cys-56 contributes to the [4Fe-4S] cluster binding site. Position 86 (His-86) interacts with (2E)-4-hydroxy-3-methylbut-2-enyl diphosphate. His-86 is a dimethylallyl diphosphate binding site. His-86 provides a ligand contact to isopentenyl diphosphate. Cys-151 is a binding site for [4Fe-4S] cluster. Residue His-179 participates in (2E)-4-hydroxy-3-methylbut-2-enyl diphosphate binding. His-179 contacts dimethylallyl diphosphate. His-179 is an isopentenyl diphosphate binding site. Glu-181 serves as the catalytic Proton donor. Residue Thr-244 participates in (2E)-4-hydroxy-3-methylbut-2-enyl diphosphate binding. Cys-282 is a binding site for [4Fe-4S] cluster. Ser-311, Ser-312, Asn-313, and Ser-374 together coordinate (2E)-4-hydroxy-3-methylbut-2-enyl diphosphate. Residues Ser-311, Ser-312, Asn-313, and Ser-374 each coordinate dimethylallyl diphosphate. Isopentenyl diphosphate contacts are provided by Ser-311, Ser-312, Asn-313, and Ser-374.

Belongs to the IspH family. It depends on [4Fe-4S] cluster as a cofactor.

It catalyses the reaction isopentenyl diphosphate + 2 oxidized [2Fe-2S]-[ferredoxin] + H2O = (2E)-4-hydroxy-3-methylbut-2-enyl diphosphate + 2 reduced [2Fe-2S]-[ferredoxin] + 2 H(+). The catalysed reaction is dimethylallyl diphosphate + 2 oxidized [2Fe-2S]-[ferredoxin] + H2O = (2E)-4-hydroxy-3-methylbut-2-enyl diphosphate + 2 reduced [2Fe-2S]-[ferredoxin] + 2 H(+). It participates in isoprenoid biosynthesis; dimethylallyl diphosphate biosynthesis; dimethylallyl diphosphate from (2E)-4-hydroxy-3-methylbutenyl diphosphate: step 1/1. The protein operates within isoprenoid biosynthesis; isopentenyl diphosphate biosynthesis via DXP pathway; isopentenyl diphosphate from 1-deoxy-D-xylulose 5-phosphate: step 6/6. Catalyzes the conversion of 1-hydroxy-2-methyl-2-(E)-butenyl 4-diphosphate (HMBPP) into a mixture of isopentenyl diphosphate (IPP) and dimethylallyl diphosphate (DMAPP). Acts in the terminal step of the DOXP/MEP pathway for isoprenoid precursor biosynthesis. This is 4-hydroxy-3-methylbut-2-enyl diphosphate reductase from Gloeobacter violaceus (strain ATCC 29082 / PCC 7421).